The chain runs to 257 residues: Hydroxyacylglutathione hydrolase (257 aa).

The Zn(2+) site is built by His56, His58, Asp60, His61, His112, Asp131, and His169.

The protein belongs to the metallo-beta-lactamase superfamily. Glyoxalase II family. As to quaternary structure, monomer. It depends on Zn(2+) as a cofactor.

It catalyses the reaction an S-(2-hydroxyacyl)glutathione + H2O = a 2-hydroxy carboxylate + glutathione + H(+). The protein operates within secondary metabolite metabolism; methylglyoxal degradation; (R)-lactate from methylglyoxal: step 2/2. Thiolesterase that catalyzes the hydrolysis of S-D-lactoyl-glutathione to form glutathione and D-lactic acid. The chain is Hydroxyacylglutathione hydrolase from Ectopseudomonas mendocina (strain ymp) (Pseudomonas mendocina).